We begin with the raw amino-acid sequence, 359 residues long: 3-dehydroquinate synthase (359 aa).

Residues 71–76 (DGEAYK), 105–109 (GVIGD), 129–130 (TT), lysine 142, and lysine 151 each bind NAD(+). Zn(2+)-binding residues include glutamate 184, histidine 247, and histidine 264.

This sequence belongs to the sugar phosphate cyclases superfamily. Dehydroquinate synthase family. The cofactor is Co(2+). Zn(2+) is required as a cofactor. Requires NAD(+) as cofactor.

Its subcellular location is the cytoplasm. The catalysed reaction is 7-phospho-2-dehydro-3-deoxy-D-arabino-heptonate = 3-dehydroquinate + phosphate. The protein operates within metabolic intermediate biosynthesis; chorismate biosynthesis; chorismate from D-erythrose 4-phosphate and phosphoenolpyruvate: step 2/7. Catalyzes the conversion of 3-deoxy-D-arabino-heptulosonate 7-phosphate (DAHP) to dehydroquinate (DHQ). The protein is 3-dehydroquinate synthase of Burkholderia vietnamiensis (strain G4 / LMG 22486) (Burkholderia cepacia (strain R1808)).